The chain runs to 500 residues: MTLWCTVLGALLTVVGCLCLSLLLRHRRPWEPPLDKGFVPWLGHSMAFRKNMFEFLKGMRAKHGDVFTVQLGGQYFTFVMDPLSFGPIIKNTEKALDFQSYAKELVLKVFGYQSVDGDHRMIHLASTKHLMGQGLEELNQAMLDSLSLVMLGPKGSSLGASSWCEDGLFHFCYRILFKAGFLSLFGYTKDKQQDLDEADELFRKFRRFDFLFPRFVYSLLGPREWVEVSQLQRLFHQRLSVEQNLEKDGISCWLGYMLQFLREQGIASSMQDKFNFMMLWASQGNTGPTCFWVLLFLLKHQDAMKAVREEATRVMGKARLEAKKSFTFTPSALKHTPVLDSVMEESLRLCATPTLLRVVQEDYVLKMASGQEYQIRRGDKVALFPYLSVHMDPDIHPEPTAFKYDRFLNPDGTRKVDFYKSGKKIHHYSMPWGSGVSKCPGRFFALSEMKTFVLLMIMYFDFKLVDPDIPVPPIDPRRWGFGTSQPSHEVRFLYRLKPVQ.

Residues 4 to 24 (WCTVLGALLTVVGCLCLSLLL) form a helical membrane-spanning segment. Ser325 carries the post-translational modification Phosphoserine. Cys439 serves as a coordination point for heme.

This sequence belongs to the cytochrome P450 family. It depends on heme as a cofactor. In terms of tissue distribution, expressed in liver.

The protein localises to the endoplasmic reticulum membrane. It is found in the microsome membrane. It catalyses the reaction 7alpha-hydroxycholest-4-en-3-one + reduced [NADPH--hemoprotein reductase] + O2 = 7alpha,12alpha-dihydroxycholest-4-en-3-one + oxidized [NADPH--hemoprotein reductase] + H2O + H(+). The enzyme catalyses 5beta-cholestane-3alpha,7alpha-diol + reduced [NADPH--hemoprotein reductase] + O2 = 5beta-cholestane-3alpha,7alpha,12alpha-triol + oxidized [NADPH--hemoprotein reductase] + H2O + H(+). The catalysed reaction is chenodeoxycholate + reduced [NADPH--hemoprotein reductase] + O2 = cholate + oxidized [NADPH--hemoprotein reductase] + H2O + H(+). Its pathway is lipid metabolism; bile acid biosynthesis. Functionally, a cytochrome P450 monooxygenase involved in primary bile acid biosynthesis. Catalyzes the 12alpha-hydroxylation of 7alpha-hydroxy-4-cholesten-3-one, an intermediate metabolite in cholic acid biosynthesis. Controls biliary balance of cholic acid and chenodeoxycholic acid, ultimately regulating the intestinal absorption of dietary lipids. Mechanistically, uses molecular oxygen inserting one oxygen atom into a substrate, and reducing the second into a water molecule, with two electrons provided by NADPH via cytochrome P450 reductase (CPR; NADPH--hemoprotein reductase). This is 7-alpha-hydroxycholest-4-en-3-one 12-alpha-hydroxylase (Cyp8b1) from Mus musculus (Mouse).